The chain runs to 155 residues: MGKCVGVADTTFARVDMGSVAEEVLRRRLPGYRIVRHTVPGIKDLPGAAKRILSMGCEGVITLGWVGRREADKLSYLAASVGLIMVEVLTGKIVIDVTVHEDEAEAPEELAAIAVDRARKHAENLAALIREGPEALVKHAGMGLRQGYPDAGPIK.

Belongs to the DMRL synthase family.

It catalyses the reaction 2 6,7-dimethyl-8-(1-D-ribityl)lumazine + H(+) = 5-amino-6-(D-ribitylamino)uracil + riboflavin. Its pathway is cofactor biosynthesis; riboflavin biosynthesis; riboflavin from 2-hydroxy-3-oxobutyl phosphate and 5-amino-6-(D-ribitylamino)uracil: step 2/2. The polypeptide is Riboflavin synthase (ribC) (Aeropyrum pernix (strain ATCC 700893 / DSM 11879 / JCM 9820 / NBRC 100138 / K1)).